The sequence spans 349 residues: Transmembrane protein 59-like (349 aa).

An N-terminal signal peptide occupies residues 1–22; the sequence is MDSVALMPLLLLLLLQPPPATP. The N-linked (GlcNAc...) asparagine glycan is linked to Asn100. A helical membrane pass occupies residues 276–296; that stretch reads ILACCLFLSVLVMLWLSCSTL. Positions 347-349 match the Microbody targeting signal motif; that stretch reads TKL.

The protein belongs to the TMEM59 family.

The protein resides in the golgi apparatus membrane. Modulates the O-glycosylation and complex N-glycosylation steps occurring during the Golgi maturation of APP. Inhibits APP transport to the cell surface and further shedding. This is Transmembrane protein 59-like (TMEM59L) from Bos taurus (Bovine).